Here is a 306-residue protein sequence, read N- to C-terminus: Ribonuclease Z (306 aa).

Positions 62, 64, 66, 67, 138, 209, and 267 each coordinate Zn(2+). The Proton acceptor role is filled by D66.

It belongs to the RNase Z family. In terms of assembly, homodimer. Requires Zn(2+) as cofactor.

The enzyme catalyses Endonucleolytic cleavage of RNA, removing extra 3' nucleotides from tRNA precursor, generating 3' termini of tRNAs. A 3'-hydroxy group is left at the tRNA terminus and a 5'-phosphoryl group is left at the trailer molecule.. Its function is as follows. Zinc phosphodiesterase, which displays some tRNA 3'-processing endonuclease activity. Probably involved in tRNA maturation, by removing a 3'-trailer from precursor tRNA. The protein is Ribonuclease Z of Archaeoglobus fulgidus (strain ATCC 49558 / DSM 4304 / JCM 9628 / NBRC 100126 / VC-16).